Reading from the N-terminus, the 270-residue chain is Probable ribosomal RNA small subunit methyltransferase A (270 aa).

Residues His-19, Leu-21, Gly-46, Glu-67, Asp-92, and Asn-107 each coordinate S-adenosyl-L-methionine.

The protein belongs to the class I-like SAM-binding methyltransferase superfamily. rRNA adenine N(6)-methyltransferase family. RsmA subfamily.

The protein resides in the cytoplasm. Its function is as follows. Specifically dimethylates two adjacent adenosines in the loop of a conserved hairpin near the 3'-end of 16S rRNA in the 30S particle. May play a critical role in biogenesis of 30S subunits. This Methanococcoides burtonii (strain DSM 6242 / NBRC 107633 / OCM 468 / ACE-M) protein is Probable ribosomal RNA small subunit methyltransferase A.